The chain runs to 117 residues: Ig heavy chain V region 345 (117 aa).

A signal peptide spans 1–19; it reads MNFGLRLIFLVLTLKGVKC. The tract at residues 20–49 is framework-1; the sequence is EVQLVESGGGLVKPGGSLKLSCAASGFAFS. Cysteines 41 and 115 form a disulfide. Residues 50–54 are complementarity-determining-1; the sequence is SYDMS. Positions 55 to 68 are framework-2; it reads WVRQTPEKRLEWVA. A complementarity-determining-2 region spans residues 69 to 85; that stretch reads YISSGGGSTYYPDTVKG. A framework-3 region spans residues 86-117; the sequence is RFTISRDNAKNTLYLQMSSLKSEDTAMYYCAR.

The protein is Ig heavy chain V region 345 of Mus musculus (Mouse).